Reading from the N-terminus, the 99-residue chain is Small ribosomal subunit protein eS24 (99 aa).

It belongs to the eukaryotic ribosomal protein eS24 family.

This chain is Small ribosomal subunit protein eS24, found in Pyrococcus horikoshii (strain ATCC 700860 / DSM 12428 / JCM 9974 / NBRC 100139 / OT-3).